The chain runs to 241 residues: Nickel import ATP-binding protein LarO (241 aa).

One can recognise an ABC transporter domain in the interval 2-240 (IKLVNICYDY…QPARQAQLMT (239 aa)). Position 34-41 (34-41 (GPNGSGKS)) interacts with ATP.

This sequence belongs to the ABC transporter superfamily. In terms of assembly, may form an energy-coupling factor (ECF) transporter complex composed of an ATP-binding protein (A component, LarO), a transmembrane protein (T component, LarQ) and a fused possible substrate-capture protein (S component, LarMN) of unknown stoichiometry.

It localises to the cell membrane. In terms of biological role, probable ATP-binding component of the energy-coupling factor (ECF) transporter complex LarMNQO involved in nickel import. LarO is presumably responsible for energy coupling to the transport system. The polypeptide is Nickel import ATP-binding protein LarO (Lactiplantibacillus plantarum (strain ATCC BAA-793 / NCIMB 8826 / WCFS1) (Lactobacillus plantarum)).